Reading from the N-terminus, the 387-residue chain is Probable NADH-dependent butanol dehydrogenase 1 (387 aa).

It belongs to the iron-containing alcohol dehydrogenase family.

Its pathway is alcohol metabolism; butanol biosynthesis. The chain is Probable NADH-dependent butanol dehydrogenase 1 (yugJ) from Bacillus subtilis (strain 168).